The sequence spans 217 residues: 3,4-dihydroxy-2-butanone 4-phosphate synthase (217 aa).

D-ribulose 5-phosphate contacts are provided by residues arginine 37–glutamate 38, aspartate 42, arginine 150–threonine 154, and glutamate 174. Glutamate 38 lines the Mg(2+) pocket. Histidine 153 lines the Mg(2+) pocket.

The protein belongs to the DHBP synthase family. As to quaternary structure, homodimer. Mg(2+) is required as a cofactor. Requires Mn(2+) as cofactor.

It catalyses the reaction D-ribulose 5-phosphate = (2S)-2-hydroxy-3-oxobutyl phosphate + formate + H(+). It participates in cofactor biosynthesis; riboflavin biosynthesis; 2-hydroxy-3-oxobutyl phosphate from D-ribulose 5-phosphate: step 1/1. Catalyzes the conversion of D-ribulose 5-phosphate to formate and 3,4-dihydroxy-2-butanone 4-phosphate. The polypeptide is 3,4-dihydroxy-2-butanone 4-phosphate synthase (Aeromonas salmonicida (strain A449)).